The following is a 1501-amino-acid chain: Ribulose bisphosphate carboxylase (1501 aa).

Asn111 is a binding site for substrate. Lys166 (proton acceptor) is an active-site residue. Substrate is bound at residue Lys168. Residues Lys191, Asp193, and Glu194 each contribute to the Mg(2+) site. Lys191 bears the N6-carboxylysine mark. Catalysis depends on His287, which acts as the Proton acceptor. Arg288, His321, and Ser368 together coordinate substrate. Positions 486–508 (SAAAFVGASVAPAKKENVVARQA) are cleaved as a propeptide — linker. Asn619 contacts substrate. Lys674 functions as the Proton acceptor in the catalytic mechanism. Substrate is bound at residue Lys676. Positions 699, 701, and 702 each coordinate Mg(2+). Lys699 carries the N6-carboxylysine modification. Catalysis depends on His795, which acts as the Proton acceptor. Substrate is bound by residues Arg796, His829, and Ser876. A propeptide spans 994-1016 (SAAAFVGASVAPAKKENVVARQA) (linker). Asn1127 is a binding site for substrate. The Proton acceptor role is filled by Lys1182. Residue Lys1184 participates in substrate binding. Mg(2+)-binding residues include Lys1207, Asp1209, and Glu1210. Position 1207 is an N6-carboxylysine (Lys1207). Catalysis depends on His1303, which acts as the Proton acceptor. Substrate-binding residues include Arg1304, His1337, and Ser1384.

This sequence belongs to the RuBisCO large chain family. Type II subfamily. As to quaternary structure, homodimer. Requires Mg(2+) as cofactor.

The protein resides in the plastid. It localises to the chloroplast. It carries out the reaction 2 (2R)-3-phosphoglycerate + 2 H(+) = D-ribulose 1,5-bisphosphate + CO2 + H2O. It catalyses the reaction D-ribulose 1,5-bisphosphate + O2 = 2-phosphoglycolate + (2R)-3-phosphoglycerate + 2 H(+). RuBisCO catalyzes two reactions: the carboxylation of D-ribulose 1,5-bisphosphate, the primary event in carbon dioxide fixation, as well as the oxidative fragmentation of the pentose substrate. Both reactions occur simultaneously and in competition at the same active site. This chain is Ribulose bisphosphate carboxylase (rbcL), found in Symbiodinium sp. (Dinoflagellate).